The following is a 564-amino-acid chain: Isopullulanase (564 aa).

Residues 1-19 (MRSTGYLLTLSAAFQVAQA) form the signal peptide. Residues N24, N94, N115, N138, N186, N210, N305, N381, N448, N455, N460, N486, N491, N503, and N535 are each glycosylated (N-linked (GlcNAc...) asparagine).

In terms of processing, N-glycosylated.

The protein localises to the secreted. The enzyme catalyses Hydrolysis of pullulan to isopanose (6-alpha-maltosylglucose).. Hydrolyzes pullulan, a linear polymer which is composed of maltotriose units with alpha-1,6 glucosidic linkages, to produce isopanose (Glca1-4Glca1-6Glc). The protein is Isopullulanase (ipuA) of Aspergillus niger.